Reading from the N-terminus, the 469-residue chain is GDNF family receptor alpha-1 (469 aa).

The N-terminal stretch at 1 to 27 is a signal peptide; the sequence is MFLALLYLALPLADVLLSAEVSGLPGG. 3 tandem repeats follow at residues 28–116, 149–237, and 238–341. A disulfide bridge links Cys-39 with Cys-45. 2 N-linked (GlcNAc...) asparagine glycosylation sites follow: Asn-62 and Asn-163. Cystine bridges form between Cys-153/Cys-213, Cys-160/Cys-166, Cys-177/Cys-191, Cys-186/Cys-232, Cys-215/Cys-220, Cys-242/Cys-312, Cys-249/Cys-255, Cys-266/Cys-284, Cys-276/Cys-336, and Cys-314/Cys-324. N-linked (GlcNAc...) asparagine glycosylation is found at Asn-346 and Asn-405. A lipid anchor (GPI-anchor amidated serine) is attached at Ser-430. The propeptide at 431–469 is removed in mature form; sequence HISSENSFALPTSFYPSTPLILMTIALSLFLFLSSSVVL.

The protein belongs to the GDNFR family. As to quaternary structure, interacts with GDNF ligand and RET: forms a 2:2:2 ternary complex composed of GDNF ligand, GFRA1 and RET receptor.

The protein resides in the cell membrane. Its subcellular location is the golgi apparatus. It is found in the trans-Golgi network. It localises to the endosome. The protein localises to the multivesicular body. Coreceptor for GDNF, a neurotrophic factor that enhances survival and morphological differentiation of dopaminergic neurons and increases their high-affinity dopamine uptake. GDNF-binding leads to autophosphorylation and activation of the RET receptor. The protein is GDNF family receptor alpha-1 (GFRA1) of Gallus gallus (Chicken).